A 332-amino-acid chain; its full sequence is Phosphate acetyltransferase (332 aa).

Belongs to the phosphate acetyltransferase and butyryltransferase family.

It localises to the cytoplasm. It catalyses the reaction acetyl-CoA + phosphate = acetyl phosphate + CoA. It functions in the pathway metabolic intermediate biosynthesis; acetyl-CoA biosynthesis; acetyl-CoA from acetate: step 2/2. The polypeptide is Phosphate acetyltransferase (pta) (Acetivibrio thermocellus (strain ATCC 27405 / DSM 1237 / JCM 9322 / NBRC 103400 / NCIMB 10682 / NRRL B-4536 / VPI 7372) (Clostridium thermocellum)).